A 143-amino-acid chain; its full sequence is Transcriptional regulator MraZ (143 aa).

2 SpoVT-AbrB domains span residues 5–47 (SHAP…PMAE) and 76–119 (AADD…DAQR).

Belongs to the MraZ family. Forms oligomers.

It localises to the cytoplasm. It is found in the nucleoid. In Frankia casuarinae (strain DSM 45818 / CECT 9043 / HFP020203 / CcI3), this protein is Transcriptional regulator MraZ.